Consider the following 196-residue polypeptide: Imidazoleglycerol-phosphate dehydratase (196 aa).

This sequence belongs to the imidazoleglycerol-phosphate dehydratase family.

It is found in the cytoplasm. The catalysed reaction is D-erythro-1-(imidazol-4-yl)glycerol 3-phosphate = 3-(imidazol-4-yl)-2-oxopropyl phosphate + H2O. The protein operates within amino-acid biosynthesis; L-histidine biosynthesis; L-histidine from 5-phospho-alpha-D-ribose 1-diphosphate: step 6/9. This is Imidazoleglycerol-phosphate dehydratase from Caulobacter sp. (strain K31).